Reading from the N-terminus, the 110-residue chain is Ribonuclease P protein component 4 (110 aa).

Residues Cys-65, Cys-68, Cys-94, and Cys-97 each coordinate Zn(2+).

This sequence belongs to the eukaryotic/archaeal RNase P protein component 4 family. Consists of a catalytic RNA component and at least 5 protein subunits. Requires Zn(2+) as cofactor.

Its subcellular location is the cytoplasm. It catalyses the reaction Endonucleolytic cleavage of RNA, removing 5'-extranucleotides from tRNA precursor.. In terms of biological role, part of ribonuclease P, a protein complex that generates mature tRNA molecules by cleaving their 5'-ends. This Methanococcus maripaludis (strain DSM 14266 / JCM 13030 / NBRC 101832 / S2 / LL) protein is Ribonuclease P protein component 4.